A 226-amino-acid polypeptide reads, in one-letter code: Phosphoglycolate phosphatase (226 aa).

Catalysis depends on Asp12, which acts as the Nucleophile. Positions 12, 14, and 177 each coordinate Mg(2+).

The protein belongs to the HAD-like hydrolase superfamily. CbbY/CbbZ/Gph/YieH family. Mg(2+) serves as cofactor.

The catalysed reaction is 2-phosphoglycolate + H2O = glycolate + phosphate. It participates in organic acid metabolism; glycolate biosynthesis; glycolate from 2-phosphoglycolate: step 1/1. In terms of biological role, specifically catalyzes the dephosphorylation of 2-phosphoglycolate. Is involved in the dissimilation of the intracellular 2-phosphoglycolate formed during the DNA repair of 3'-phosphoglycolate ends, a major class of DNA lesions induced by oxidative stress. The polypeptide is Phosphoglycolate phosphatase (Colwellia psychrerythraea (strain 34H / ATCC BAA-681) (Vibrio psychroerythus)).